The chain runs to 339 residues: Protein H339R (339 aa).

This sequence belongs to the asfivirus H339R family. As to quaternary structure, interacts with NACA (alpha chain of nascent polypeptide-associated complex).

Its subcellular location is the host cytoplasm. The protein resides in the host nucleus. It localises to the virion. This chain is Protein H339R, found in Ornithodoros (relapsing fever ticks).